The sequence spans 103 residues: Large ribosomal subunit protein bL21 (103 aa).

This sequence belongs to the bacterial ribosomal protein bL21 family. In terms of assembly, part of the 50S ribosomal subunit. Contacts protein L20.

In terms of biological role, this protein binds to 23S rRNA in the presence of protein L20. The protein is Large ribosomal subunit protein bL21 of Borreliella burgdorferi (strain ZS7) (Borrelia burgdorferi).